The primary structure comprises 246 residues: Probable transcriptional regulatory protein BVU_3469 (246 aa).

Belongs to the TACO1 family.

It localises to the cytoplasm. The sequence is that of Probable transcriptional regulatory protein BVU_3469 from Phocaeicola vulgatus (strain ATCC 8482 / DSM 1447 / JCM 5826 / CCUG 4940 / NBRC 14291 / NCTC 11154) (Bacteroides vulgatus).